The following is a 163-amino-acid chain: ATP synthase subunit b 1 (163 aa).

The helical transmembrane segment at 7-27 threads the bilayer; sequence AETWVAVAFVILMALFAYLGV.

Belongs to the ATPase B chain family. In terms of assembly, F-type ATPases have 2 components, F(1) - the catalytic core - and F(0) - the membrane proton channel. F(1) has five subunits: alpha(3), beta(3), gamma(1), delta(1), epsilon(1). F(0) has three main subunits: a(1), b(2) and c(10-14). The alpha and beta chains form an alternating ring which encloses part of the gamma chain. F(1) is attached to F(0) by a central stalk formed by the gamma and epsilon chains, while a peripheral stalk is formed by the delta and b chains.

The protein resides in the cell inner membrane. In terms of biological role, f(1)F(0) ATP synthase produces ATP from ADP in the presence of a proton or sodium gradient. F-type ATPases consist of two structural domains, F(1) containing the extramembraneous catalytic core and F(0) containing the membrane proton channel, linked together by a central stalk and a peripheral stalk. During catalysis, ATP synthesis in the catalytic domain of F(1) is coupled via a rotary mechanism of the central stalk subunits to proton translocation. Its function is as follows. Component of the F(0) channel, it forms part of the peripheral stalk, linking F(1) to F(0). This is ATP synthase subunit b 1 from Rhodopseudomonas palustris (strain BisB5).